Consider the following 269-residue polypeptide: Tryptophan synthase alpha chain (269 aa).

Active-site proton acceptor residues include glutamate 49 and aspartate 60.

The protein belongs to the TrpA family. As to quaternary structure, tetramer of two alpha and two beta chains.

The enzyme catalyses (1S,2R)-1-C-(indol-3-yl)glycerol 3-phosphate + L-serine = D-glyceraldehyde 3-phosphate + L-tryptophan + H2O. Its pathway is amino-acid biosynthesis; L-tryptophan biosynthesis; L-tryptophan from chorismate: step 5/5. In terms of biological role, the alpha subunit is responsible for the aldol cleavage of indoleglycerol phosphate to indole and glyceraldehyde 3-phosphate. In Pseudomonas putida (strain GB-1), this protein is Tryptophan synthase alpha chain.